A 292-amino-acid chain; its full sequence is UDP-3-O-acyl-N-acetylglucosamine deacetylase (292 aa).

Zn(2+)-binding residues include His-75, His-231, and Asp-235. The Proton donor role is filled by His-258.

The protein belongs to the LpxC family. Zn(2+) is required as a cofactor.

It catalyses the reaction a UDP-3-O-[(3R)-3-hydroxyacyl]-N-acetyl-alpha-D-glucosamine + H2O = a UDP-3-O-[(3R)-3-hydroxyacyl]-alpha-D-glucosamine + acetate. It participates in glycolipid biosynthesis; lipid IV(A) biosynthesis; lipid IV(A) from (3R)-3-hydroxytetradecanoyl-[acyl-carrier-protein] and UDP-N-acetyl-alpha-D-glucosamine: step 2/6. Catalyzes the hydrolysis of UDP-3-O-myristoyl-N-acetylglucosamine to form UDP-3-O-myristoylglucosamine and acetate, the committed step in lipid A biosynthesis. This chain is UDP-3-O-acyl-N-acetylglucosamine deacetylase, found in Nautilia profundicola (strain ATCC BAA-1463 / DSM 18972 / AmH).